The sequence spans 302 residues: Sulfate adenylyltransferase subunit 2 (302 aa).

It belongs to the PAPS reductase family. CysD subfamily. Heterodimer composed of CysD, the smaller subunit, and CysN.

The catalysed reaction is sulfate + ATP + H(+) = adenosine 5'-phosphosulfate + diphosphate. It participates in sulfur metabolism; hydrogen sulfide biosynthesis; sulfite from sulfate: step 1/3. Functionally, with CysN forms the ATP sulfurylase (ATPS) that catalyzes the adenylation of sulfate producing adenosine 5'-phosphosulfate (APS) and diphosphate, the first enzymatic step in sulfur assimilation pathway. APS synthesis involves the formation of a high-energy phosphoric-sulfuric acid anhydride bond driven by GTP hydrolysis by CysN coupled to ATP hydrolysis by CysD. The protein is Sulfate adenylyltransferase subunit 2 of Escherichia coli O7:K1 (strain IAI39 / ExPEC).